Here is a 389-residue protein sequence, read N- to C-terminus: Large envelope protein (389 aa).

Met1 is subject to N-acetylmethionine. The N-myristoyl glycine; by host moiety is linked to residue Gly2. Positions 2–108 (GQNLSTSNPL…PPLRNTHPQA (107 aa)) are pre-S1. Residues 2 to 163 (GQNLSTSNPL…FSRIGDPALN (162 aa)) are pre-S. Residues 2–170 (GQNLSTSNPL…ALNMENITSG (169 aa)) lie on the Virion surface; in external conformation side of the membrane. Residues 2-242 (GQNLSTSNPL…PGYRWMCLRR (241 aa)) are Intravirion; in internal conformation-facing. Residue Asn37 is glycosylated (O-linked (GalNAc...) threonine). The disordered stretch occupies residues 76 to 103 (TLPANPPPASTNRQSGRQPTPLSPPLRN). Over residues 85 to 95 (STNRQSGRQPT) the composition is skewed to polar residues. A pre-S2 region spans residues 109–163 (MQWNSTTFHQTLQDPRVRGLYFPAGGSSSGTVNPVLTTASPLSSIFSRIGDPALN). Residues 171–191 (FLGPLLVLQAGFFLLTRILTI) form a helical membrane-spanning segment. Over 192–242 (PQSLDSWWTSLNFLGGTTVCLGQNSQSPTSNHSPTSCPPTCPGYRWMCLRR) the chain is Intravirion; in external conformation. Residues 243–263 (FIIFLFILLLCLIFLLVLLDY) traverse the membrane as a helical segment. Residues 264–337 (QGMLPVCPLI…WASARFSWLS (74 aa)) lie on the Virion surface side of the membrane. Residue Asn309 is glycosylated (N-linked (GlcNAc...) asparagine; by host). Residues 338 to 358 (LLVPFVQWFVGLSPTVWLSVI) traverse the membrane as a helical segment. Over 359-364 (WMMWYW) the chain is Intravirion. The chain crosses the membrane as a helical span at residues 365–387 (GPSLYSILSPFLPLLPIFFCLWV). The Virion surface segment spans residues 388–389 (YI).

This sequence belongs to the orthohepadnavirus major surface antigen family. As to quaternary structure, in its internal form (Li-HBsAg), interacts with the capsid protein and with the isoform S. Interacts with host chaperone CANX. In terms of assembly, associates with host chaperone CANX through its pre-S2 N glycan; this association may be essential for isoform M proper secretion. Interacts with isoform L. Interacts with the antigens of satellite virus HDV (HDVAgs); this interaction is required for encapsidation of HDV genomic RNA. In terms of processing, isoform M is N-terminally acetylated by host at a ratio of 90%, and N-glycosylated by host at the pre-S2 region. Post-translationally, myristoylated.

The protein localises to the virion membrane. Functionally, the large envelope protein exists in two topological conformations, one which is termed 'external' or Le-HBsAg and the other 'internal' or Li-HBsAg. In its external conformation the protein attaches the virus to cell receptors and thereby initiating infection. This interaction determines the species specificity and liver tropism. This attachment induces virion internalization predominantly through caveolin-mediated endocytosis. The large envelope protein also assures fusion between virion membrane and endosomal membrane. In its internal conformation the protein plays a role in virion morphogenesis and mediates the contact with the nucleocapsid like a matrix protein. Its function is as follows. The middle envelope protein plays an important role in the budding of the virion. It is involved in the induction of budding in a nucleocapsid independent way. In this process the majority of envelope proteins bud to form subviral lipoprotein particles of 22 nm of diameter that do not contain a nucleocapsid. In Homo sapiens (Human), this protein is Large envelope protein.